The following is a 134-amino-acid chain: C-C motif chemokine 21 (134 aa).

The signal sequence occupies residues 1-23 (MAQSLALSLLILVLAFGIPRTQG). Cystine bridges form between cysteine 31–cysteine 57, cysteine 32–cysteine 75, and cysteine 103–cysteine 122. The disordered stretch occupies residues 88–134 (QHLDKTPSPQKPAQGCRKDRGASKTGKKGKGSKGCKRTERSQTPKGP). The C-terminal basic extension stretch occupies residues 98-134 (KPAQGCRKDRGASKTGKKGKGSKGCKRTERSQTPKGP). Basic residues predominate over residues 112–122 (TGKKGKGSKGC). A compositionally biased stretch (basic and acidic residues) spans 123–134 (KRTERSQTPKGP).

The protein belongs to the intercrine beta (chemokine CC) family. Monomer. Binds to CCR7. Interacts with PDPN; relocalizes PDPN to the basolateral membrane. Interacts with TNFAIP6 (via Link domain). Interacts with GPR174. Highly expressed in high endothelial venules of lymph nodes, spleen and appendix. Intermediate levels found in small intestine, thyroid gland and trachea. Low level expression in thymus, bone marrow, liver, and pancreas. Also found in tonsil, fetal heart and fetal spleen.

It localises to the secreted. In terms of biological role, inhibits hemopoiesis and stimulates chemotaxis. Chemotactic in vitro for thymocytes and activated T-cells, but not for B-cells, macrophages, or neutrophils. Shows preferential activity towards naive T-cells. May play a role in mediating homing of lymphocytes to secondary lymphoid organs. Binds to atypical chemokine receptor ACKR4 and mediates the recruitment of beta-arrestin (ARRB1/2) to ACKR4. The sequence is that of C-C motif chemokine 21 (CCL21) from Homo sapiens (Human).